A 264-amino-acid chain; its full sequence is Cercarial protease (264 aa).

A signal peptide spans M1–T19. Residues F20 to L27 constitute a propeptide that is removed on maturation. The Peptidase S1 domain occupies I28–I264. A disulfide bridge connects residues C53 and C69. Catalysis depends on charge relay system residues H68 and D126. Residues C192 and C202 are joined by a disulfide bond. S218 (charge relay system) is an active-site residue.

It belongs to the peptidase S1 family. As to expression, acetabular (penetration) glands.

Activated by an autocatalytic mechanism. Its function is as follows. This protease cleaves elastin and thus facilitates penetration of schistosome parasite larvae through elastin-rich tissue of the host. This chain is Cercarial protease, found in Schistosoma mansoni (Blood fluke).